Reading from the N-terminus, the 340-residue chain is Tartrate-resistant acid phosphatase type 5 (340 aa).

The N-terminal stretch at 1-20 (MDTWTVLLILQASLVLPGAV) is a signal peptide. The Fe cation site is built by D41, D79, Y82, and N118. Residues N124 and N155 are each glycosylated (N-linked (GlcNAc...) asparagine). C169 and C227 are disulfide-bonded. 3 residues coordinate Fe cation: H213, H248, and H250.

Fe cation is required as a cofactor.

It is found in the secreted. It carries out the reaction a phosphate monoester + H2O = an alcohol + phosphate. In terms of biological role, uteroferrin is a phosphoprotein phosphatase, synthesized in response to progesterone. It appears to function in transplacental transport of iron in pig. The chain is Tartrate-resistant acid phosphatase type 5 (ACP5) from Sus scrofa (Pig).